A 311-amino-acid chain; its full sequence is Histidine decarboxylase proenzyme (311 aa).

Substrate is bound by residues Asp-64 and Ser-82. Ser-83 carries the post-translational modification Pyruvic acid (Ser). The active-site Proton donor is Glu-198.

The proenzyme is a hexamer of identical pi chains; each pi chain monomer is cleaved to form a small (or beta) chain and a large (or alpha) chain by non-hydrolytic self-catalysis. The cofactor is pyruvate.

It catalyses the reaction L-histidine + H(+) = histamine + CO2. The sequence is that of Histidine decarboxylase proenzyme (hdcA) from Lactobacillus sp. (strain 30a).